Consider the following 905-residue polypeptide: Alanine--tRNA ligase (905 aa).

Histidine 595, histidine 599, cysteine 696, and histidine 700 together coordinate Zn(2+).

It belongs to the class-II aminoacyl-tRNA synthetase family. Requires Zn(2+) as cofactor.

It is found in the cytoplasm. The catalysed reaction is tRNA(Ala) + L-alanine + ATP = L-alanyl-tRNA(Ala) + AMP + diphosphate. Catalyzes the attachment of alanine to tRNA(Ala) in a two-step reaction: alanine is first activated by ATP to form Ala-AMP and then transferred to the acceptor end of tRNA(Ala). Also edits incorrectly charged Ser-tRNA(Ala) and Gly-tRNA(Ala) via its editing domain. The protein is Alanine--tRNA ligase of Anaeromyxobacter dehalogenans (strain 2CP-C).